The primary structure comprises 873 residues: Alanine--tRNA ligase (873 aa).

4 residues coordinate Zn(2+): histidine 557, histidine 561, cysteine 659, and histidine 663.

It belongs to the class-II aminoacyl-tRNA synthetase family. It depends on Zn(2+) as a cofactor.

The protein localises to the cytoplasm. The catalysed reaction is tRNA(Ala) + L-alanine + ATP = L-alanyl-tRNA(Ala) + AMP + diphosphate. Its function is as follows. Catalyzes the attachment of alanine to tRNA(Ala) in a two-step reaction: alanine is first activated by ATP to form Ala-AMP and then transferred to the acceptor end of tRNA(Ala). Also edits incorrectly charged Ser-tRNA(Ala) and Gly-tRNA(Ala) via its editing domain. In Nitrosococcus oceani (strain ATCC 19707 / BCRC 17464 / JCM 30415 / NCIMB 11848 / C-107), this protein is Alanine--tRNA ligase.